The sequence spans 504 residues: Maturase K (504 aa).

It belongs to the intron maturase 2 family. MatK subfamily.

The protein resides in the plastid. It localises to the chloroplast. Functionally, usually encoded in the trnK tRNA gene intron. Probably assists in splicing its own and other chloroplast group II introns. In Calyptranthes pallens (Spicewood), this protein is Maturase K.